The chain runs to 209 residues: tRNA (guanine-N(7)-)-methyltransferase (209 aa).

The S-adenosyl-L-methionine site is built by Asp-35, Glu-60, Asn-87, and Asp-113. Asp-113 is a catalytic residue. Residues Lys-117 and Asp-149 each contribute to the substrate site.

It belongs to the class I-like SAM-binding methyltransferase superfamily. TrmB family.

The catalysed reaction is guanosine(46) in tRNA + S-adenosyl-L-methionine = N(7)-methylguanosine(46) in tRNA + S-adenosyl-L-homocysteine. Its pathway is tRNA modification; N(7)-methylguanine-tRNA biosynthesis. Catalyzes the formation of N(7)-methylguanine at position 46 (m7G46) in tRNA. The polypeptide is tRNA (guanine-N(7)-)-methyltransferase (Prochlorococcus marinus (strain MIT 9215)).